The primary structure comprises 287 residues: MLPATFKLCAGISYRHMRNMTGLRKNAMVAIHHELNMLAGPNPSSWISHVRRRSSLLSSRIEEEQGYNEAEVSYVKQGEEALQKSISILGDQDGWTTEIIAANGDKVLSKVLPDVGKVFKLEVLLDQRSDNLYVELVGNMEQMGDWNPNVKEVKILQKIGQETMVTHEVSGPTPGNVVGPRDFVSVRCAKRRGSTCFLAGMSTQHPTMPEQRGVVRAENGPTCIVMRPSADDPNKTKFTWLLSIDLKGWIPKTIINKVLSQTQVDFANHLRQRMADNSVSMEMAAAC.

Residues 1–61 constitute a mitochondrion transit peptide; the sequence is MLPATFKLCA…RRSSLLSSRI (61 aa). The START domain occupies 66 to 279; it reads GYNEAEVSYV…LRQRMADNSV (214 aa).

As to quaternary structure, may interact with TSPO.

The protein localises to the mitochondrion. It carries out the reaction cholesterol(in) = cholesterol(out). Its pathway is steroid metabolism; cholesterol metabolism. In terms of biological role, plays a key role in steroid hormone synthesis by enhancing the metabolism of cholesterol into pregnenolone. Mediates the transfer of cholesterol from the outer mitochondrial membrane to the inner mitochondrial membrane where it is cleaved to pregnenolone. The chain is Steroidogenic acute regulatory protein, mitochondrial (star) from Oncorhynchus mykiss (Rainbow trout).